Here is a 29-residue protein sequence, read N- to C-terminus: Protein Tat (29 aa).

The tract at residues 1-29 (PSSQPRGDPTGQEEPKKKVEKKTTTDPFD) is disordered. The short motif at 6–8 (RGD) is the Cell attachment site element. Basic and acidic residues predominate over residues 13–29 (EEPKKKVEKKTTTDPFD).

The protein belongs to the lentiviruses Tat family. Interacts with host CCNT1. Associates with the P-TEFb complex composed at least of Tat, P-TEFb (CDK9 and CCNT1), TAR RNA, RNA Pol II. Recruits the HATs CREBBP, TAF1/TFIID, EP300, PCAF and GCN5L2. Interacts with host KAT5/Tip60; this interaction targets the latter to degradation. Interacts with the host deacetylase SIRT1. Interacts with host capping enzyme RNGTT; this interaction stimulates RNGTT. Binds to host KDR, and to the host integrins ITGAV/ITGB3 and ITGA5/ITGB1. Interacts with host KPNB1/importin beta-1 without previous binding to KPNA1/importin alpha-1. Interacts with EIF2AK2. Interacts with host nucleosome assembly protein NAP1L1; this interaction may be required for the transport of Tat within the nucleus, since the two proteins interact at the nuclear rim. Interacts with host C1QBP/SF2P32; this interaction involves lysine-acetylated Tat. Interacts with the host chemokine receptors CCR2, CCR3 and CXCR4. Interacts with host DPP4/CD26; this interaction may trigger an anti-proliferative effect. Interacts with host LDLR. Interacts with the host extracellular matrix metalloproteinase MMP1. Interacts with host PRMT6; this interaction mediates Tat's methylation. Interacts with, and is ubiquitinated by MDM2/Hdm2. Interacts with host PSMC3 and HTATIP2. Interacts with STAB1; this interaction may overcome SATB1-mediated repression of IL2 and IL2RA (interleukin) in T cells by binding to the same domain than HDAC1. Interacts (when acetylated) with human CDK13, thereby increasing HIV-1 mRNA splicing and promoting the production of the doubly spliced HIV-1 protein Nef. Acetylation by EP300, CREBBP, GCN5L2/GCN5 and PCAF regulates the transactivation activity of Tat. Post-translationally, phosphorylated by EIF2AK2 on serine and threonine residues adjacent to the basic region important for TAR RNA binding and function. Phosphorylation of Tat by EIF2AK2 is dependent on the prior activation of EIF2AK2 by dsRNA. In terms of processing, asymmetrical arginine methylation by host PRMT6 seems to diminish the transactivation capacity of Tat and affects the interaction with host CCNT1. Polyubiquitination by MDM2 does not target Tat to degradation, but activates its transactivation function and fosters interaction with CCNT1 and TAR RNA.

It localises to the host nucleus. Its subcellular location is the host nucleolus. It is found in the host cytoplasm. The protein resides in the secreted. In terms of biological role, transcriptional activator that increases RNA Pol II processivity, thereby increasing the level of full-length viral transcripts. Recognizes a hairpin structure at the 5'-LTR of the nascent viral mRNAs referred to as the transactivation responsive RNA element (TAR) and recruits the cyclin T1-CDK9 complex (P-TEFb complex) that will in turn hyperphosphorylate the RNA polymerase II to allow efficient elongation. The CDK9 component of P-TEFb and other Tat-activated kinases hyperphosphorylate the C-terminus of RNA Pol II that becomes stabilized and much more processive. Other factors such as HTATSF1/Tat-SF1, SUPT5H/SPT5, and HTATIP2 are also important for Tat's function. Besides its effect on RNA Pol II processivity, Tat induces chromatin remodeling of proviral genes by recruiting the histone acetyltransferases (HATs) CREBBP, EP300 and PCAF to the chromatin. This also contributes to the increase in proviral transcription rate, especially when the provirus integrates in transcriptionally silent region of the host genome. To ensure maximal activation of the LTR, Tat mediates nuclear translocation of NF-kappa-B by interacting with host RELA. Through its interaction with host TBP, Tat may also modulate transcription initiation. Tat can reactivate a latently infected cell by penetrating in it and transactivating its LTR promoter. In the cytoplasm, Tat is thought to act as a translational activator of HIV-1 mRNAs. Extracellular circulating Tat can be endocytosed by surrounding uninfected cells via the binding to several surface receptors such as CD26, CXCR4, heparan sulfate proteoglycans (HSPG) or LDLR. Neurons are rarely infected, but they internalize Tat via their LDLR. Endosomal low pH allows Tat to cross the endosome membrane to enter the cytosol and eventually further translocate into the nucleus, thereby inducing severe cell dysfunctions ranging from cell activation to cell death. Through its interaction with nuclear HATs, Tat is potentially able to control the acetylation-dependent cellular gene expression. Tat seems to inhibit the HAT activity of KAT5/Tip60 and TAF1, and consequently modify the expression of specific cellular genes. Modulates the expression of many cellular genes involved in cell survival, proliferation or in coding for cytokines (such as IL10) or cytokine receptors. May be involved in the derepression of host interleukin IL2 expression. Mediates the activation of cyclin-dependent kinases and dysregulation of microtubule network. Tat plays a role in T-cell and neurons apoptosis. Tat induced neurotoxicity and apoptosis probably contribute to neuroAIDS. Host extracellular matrix metalloproteinase MMP1 cleaves Tat and decreases Tat's mediated neurotoxicity. Circulating Tat also acts as a chemokine-like and/or growth factor-like molecule that binds to specific receptors on the surface of the cells, affecting many cellular pathways. In the vascular system, Tat binds to ITGAV/ITGB3 and ITGA5/ITGB1 integrins dimers at the surface of endothelial cells and competes with bFGF for heparin-binding sites, leading to an excess of soluble bFGF. Binds to KDR/VEGFR-2. All these Tat-mediated effects enhance angiogenesis in Kaposi's sarcoma lesions. In Homo sapiens (Human), this protein is Protein Tat.